The following is a 306-amino-acid chain: Phenylcoumaran benzylic ether reductase IRL1 (306 aa).

NADP(+)-binding positions include 10 to 16, Arg-35, and Lys-44; that span reads GATGYIG. Lys-132 (proton acceptor) is an active-site residue. Residue Arg-136 participates in NADP(+) binding.

It belongs to the NmrA-type oxidoreductase family. Isoflavone reductase subfamily. In terms of tissue distribution, highly expressed in sclerotesta. Expressed in roots, and two-to-four year stems.

The enzyme catalyses (-)-dehydrodiconiferyl alcohol + NADPH + H(+) = (S)-isodihydrodehydrodiconiferyl alcohol + NADP(+). It carries out the reaction (+)-dehydrodiconiferyl alcohol + NADPH + H(+) = (R)-isodihydrodehydrodiconiferyl alcohol + NADP(+). It catalyses the reaction (2R,3S)-dihydrodehydrodiconiferyl alcohol + NADPH + H(+) = (S)-tetrahydrodehydrodiconiferyl alcohol + NADP(+). The catalysed reaction is (2S,3R)-dihydrodehydrodiconiferyl alcohol + NADPH + H(+) = (R)-tetrahydrodehydrodiconiferyl alcohol + NADP(+). In terms of biological role, oxidoreductase involved in lignan biosynthesis. Catalyzes the NADPH-dependent reduction of phenylcoumaran benzylic ethers. Converts dehydrodiconiferyl alcohol (DDC) to isodihydrodehydrodiconiferyl alcohol (IDDDC), and dihydrodehydrodiconiferyl alcohol (DDDC) to tetrahydrodehydrodiconiferyl alcohol (TDDC). May regulate changes in lignin content and accumulation of flavonoids. The protein is Phenylcoumaran benzylic ether reductase IRL1 of Ginkgo biloba (Ginkgo).